We begin with the raw amino-acid sequence, 437 residues long: GTPase Der (437 aa).

2 consecutive EngA-type G domains span residues 4-167 (PVVA…AEKD) and 175-352 (IRFS…DHQH). Residues 10-17 (GRPNVGKS), 57-61 (DTGGI), 119-122 (NKVD), 181-188 (GRPNVGKS), 229-233 (DTAGI), and 294-297 (NKWD) each bind GTP. In terms of domain architecture, KH-like spans 353-437 (RRIQSAVLND…PIRLIKRRRK (85 aa)).

The protein belongs to the TRAFAC class TrmE-Era-EngA-EngB-Septin-like GTPase superfamily. EngA (Der) GTPase family. As to quaternary structure, associates with the 50S ribosomal subunit.

GTPase that plays an essential role in the late steps of ribosome biogenesis. The protein is GTPase Der of Limosilactobacillus fermentum (strain NBRC 3956 / LMG 18251) (Lactobacillus fermentum).